The sequence spans 996 residues: MAAEWASRFWLWAALLIPVAAVYEDQVGKFDWRQQYVGKLKFASLEFSPGSKKLVVATEKNVIAALNSRTGEILWRHVDKGTAEGAVDAMLLHGQDVITVSNGGRIMRSWETNIGGLNWEITLDTGSFQALGLVGLQESVRYIAVLKKTTLALHHLSSGHLKWVEHLPESDSIHYQMVYSYGSGVVWALGVVPFSHVNIVKFNVEDGEIVQQVRVSTPWLQHLSGACGVVDEAVLVCPDPSSRSLQTLALETEWELRQIPLQSLDLEFGSGFQPRVLPTQPNPVDASRAQFFLHLSPSHYALLQYHYGILSLLKNFPQTALVSFATTGEKTVAAVMACRNEVQKTSNSEDGSMGSFSEKSSSKDSLACFNQTYTINLYLVETGRRLLDTTTTFSLEQSGTRPERLYIQVFLKKDDSVGYRALVQTEDHLLLFLQQLAGKVVLWSREESLAEVVCLEMVDLPLTGAQAELEGEFGKKAAIQDGLLGMFLKRLSSQLILLQAWTSHLWKMFYDARKPRSQIKNEINIDTLARDEFNLQKMMVMVTASGKLFGIESSSGTILWKQYLPSVKPDSSFKLMVQRTTAHFPHPPQCTLLVKDKESGMSSLYVFNPIFGKWSQVAPPVLKRPILQSLLLPVMDQDYAKVLLLIDDEYKVTAFPATRNVLRQLHELAPSIFFYLVDAEQGRLCGYRLRKDLTTELSWELTIPPEVRRIVKVKGKRSSEHVHSQGRVMGDRSVLYKSLNPNLLAVVTESTDAHHERTFIGIFLIDGVTGRIIHSSAQKKAKGPVHIVHSENWVVYQYWNTKARRNEFTVLELYEGTEQYNATAFSSLDRPQLPQVLQQSYIFPSSISAMEATITERGITSRHLLIGLPSGAILSLPKALLDPRRPEIPTEQSREENLIPYSPDVQIHAERFINYNQTVSRMRGIYTAPSGLESTCLVVAYGLDIYQTRVYPSKQFDVLKDDYDYVLISSVLFGLVFATMITKRLAQVKLLNRAWR.

The N-terminal stretch at 1-22 (MAAEWASRFWLWAALLIPVAAV) is a signal peptide. Residues 23–965 (YEDQVGKFDW…FDVLKDDYDY (943 aa)) lie on the Lumenal side of the membrane. 2 disulfide bridges follow: cysteine 227–cysteine 237 and cysteine 338–cysteine 368. An N-linked (GlcNAc...) asparagine glycan is attached at asparagine 916. The helical transmembrane segment at 966 to 986 (VLISSVLFGLVFATMITKRLA) threads the bilayer. At 987 to 996 (QVKLLNRAWR) the chain is on the cytoplasmic side.

Belongs to the EMC1 family. In terms of assembly, component of the ER membrane protein complex (EMC).

Its subcellular location is the endoplasmic reticulum membrane. In terms of biological role, part of the endoplasmic reticulum membrane protein complex (EMC) that enables the energy-independent insertion into endoplasmic reticulum membranes of newly synthesized membrane proteins. Preferentially accommodates proteins with transmembrane domains that are weakly hydrophobic or contain destabilizing features such as charged and aromatic residues. Involved in the cotranslational insertion of multi-pass membrane proteins in which stop-transfer membrane-anchor sequences become ER membrane spanning helices. It is also required for the post-translational insertion of tail-anchored/TA proteins in endoplasmic reticulum membranes. By mediating the proper cotranslational insertion of N-terminal transmembrane domains in an N-exo topology, with translocated N-terminus in the lumen of the ER, controls the topology of multi-pass membrane proteins like the G protein-coupled receptors. By regulating the insertion of various proteins in membranes, it is indirectly involved in many cellular processes. This chain is ER membrane protein complex subunit 1 (EMC1), found in Pongo abelii (Sumatran orangutan).